The following is a 293-amino-acid chain: Formamidopyrimidine-DNA glycosylase (293 aa).

The active-site Schiff-base intermediate with DNA is the Pro2. The active-site Proton donor is the Glu3. The active-site Proton donor; for beta-elimination activity is Lys58. Positions 104, 127, and 170 each coordinate DNA. The FPG-type zinc-finger motif lies at 257–293; that stretch reads SVYGREGKPCRNPACGGTVERVVQSGRSTFFCASCQT. Arg283 (proton donor; for delta-elimination activity) is an active-site residue.

It belongs to the FPG family. In terms of assembly, monomer. Zn(2+) is required as a cofactor.

It catalyses the reaction Hydrolysis of DNA containing ring-opened 7-methylguanine residues, releasing 2,6-diamino-4-hydroxy-5-(N-methyl)formamidopyrimidine.. The enzyme catalyses 2'-deoxyribonucleotide-(2'-deoxyribose 5'-phosphate)-2'-deoxyribonucleotide-DNA = a 3'-end 2'-deoxyribonucleotide-(2,3-dehydro-2,3-deoxyribose 5'-phosphate)-DNA + a 5'-end 5'-phospho-2'-deoxyribonucleoside-DNA + H(+). In terms of biological role, involved in base excision repair of DNA damaged by oxidation or by mutagenic agents. Acts as a DNA glycosylase that recognizes and removes damaged bases. Has a preference for oxidized purines, such as 7,8-dihydro-8-oxoguanine (8-oxoG). Has AP (apurinic/apyrimidinic) lyase activity and introduces nicks in the DNA strand. Cleaves the DNA backbone by beta-delta elimination to generate a single-strand break at the site of the removed base with both 3'- and 5'-phosphates. The protein is Formamidopyrimidine-DNA glycosylase of Brucella ovis (strain ATCC 25840 / 63/290 / NCTC 10512).